A 198-amino-acid chain; its full sequence is Recombination protein RecR (198 aa).

The C4-type zinc finger occupies 56–71 (CTECRDFSETKICAIC). Residues 79 to 174 (HQLCVVESPP…RPSRLAQGLP (96 aa)) form the Toprim domain.

Belongs to the RecR family.

Functionally, may play a role in DNA repair. It seems to be involved in an RecBC-independent recombinational process of DNA repair. It may act with RecF and RecO. This chain is Recombination protein RecR, found in Xylella fastidiosa (strain Temecula1 / ATCC 700964).